The primary structure comprises 287 residues: Large ribosomal subunit protein uL2 (287 aa).

Residues 221–287 (RGSVMNPCDH…SKRSRGGRDS (67 aa)) are disordered. Residues 271–287 (LRKRRKTSKRSRGGRDS) show a composition bias toward basic residues.

This sequence belongs to the universal ribosomal protein uL2 family. As to quaternary structure, part of the 50S ribosomal subunit. Forms a bridge to the 30S subunit in the 70S ribosome.

One of the primary rRNA binding proteins. Required for association of the 30S and 50S subunits to form the 70S ribosome, for tRNA binding and peptide bond formation. It has been suggested to have peptidyltransferase activity; this is somewhat controversial. Makes several contacts with the 16S rRNA in the 70S ribosome. In Synechococcus sp. (strain CC9605), this protein is Large ribosomal subunit protein uL2.